The following is a 323-amino-acid chain: Acetyl esterase (323 aa).

The Involved in the stabilization of the negatively charged intermediate by the formation of the oxyanion hole motif lies at 91-93 (HGG). Active-site residues include Ser-165, Asp-262, and His-292.

This sequence belongs to the 'GDXG' lipolytic enzyme family. As to quaternary structure, homodimer. Interacts with MalT and MelA.

It is found in the cytoplasm. Functionally, displays esterase activity towards short chain fatty esters (acyl chain length of up to 8 carbons). Able to hydrolyze triacetylglycerol (triacetin) and tributyrylglycerol (tributyrin), but not trioleylglycerol (triolein) or cholesterol oleate. Negatively regulates MalT activity by antagonizing maltotriose binding. Inhibits MelA galactosidase activity. In Salmonella agona (strain SL483), this protein is Acetyl esterase.